Consider the following 210-residue polypeptide: Orotate phosphoribosyltransferase (210 aa).

5-phospho-alpha-D-ribose 1-diphosphate contacts are provided by residues Arg-94, Lys-98, His-100, and 120 to 128 (EDLISTGGS). Residue Ser-124 participates in orotate binding.

It belongs to the purine/pyrimidine phosphoribosyltransferase family. PyrE subfamily. As to quaternary structure, homodimer. It depends on Mg(2+) as a cofactor.

The enzyme catalyses orotidine 5'-phosphate + diphosphate = orotate + 5-phospho-alpha-D-ribose 1-diphosphate. It functions in the pathway pyrimidine metabolism; UMP biosynthesis via de novo pathway; UMP from orotate: step 1/2. Catalyzes the transfer of a ribosyl phosphate group from 5-phosphoribose 1-diphosphate to orotate, leading to the formation of orotidine monophosphate (OMP). This is Orotate phosphoribosyltransferase from Bacillus cereus (strain ATCC 14579 / DSM 31 / CCUG 7414 / JCM 2152 / NBRC 15305 / NCIMB 9373 / NCTC 2599 / NRRL B-3711).